The primary structure comprises 274 residues: Penicillin-insensitive murein endopeptidase (274 aa).

A signal peptide spans 1 to 19 (MNKTAIALLALLASSVSLA). 3 cysteine pairs are disulfide-bonded: Cys-44/Cys-265, Cys-187/Cys-235, and Cys-216/Cys-223. Zn(2+) contacts are provided by His-110, His-113, Asp-120, Asp-147, His-150, and His-211. A disordered region spans residues 227 to 274 (PLPPPGDGCGAELQSWFEPPKPGTTKPEKKTPPPLPPSCQALLDEHVI).

This sequence belongs to the peptidase M74 family. In terms of assembly, dimer. Requires Zn(2+) as cofactor.

It is found in the periplasm. In terms of biological role, murein endopeptidase that cleaves the D-alanyl-meso-2,6-diamino-pimelyl amide bond that connects peptidoglycan strands. Likely plays a role in the removal of murein from the sacculus. The sequence is that of Penicillin-insensitive murein endopeptidase from Escherichia coli O157:H7.